Reading from the N-terminus, the 171-residue chain is UPF0312 protein MW2606 (171 aa).

Belongs to the UPF0312 family.

The sequence is that of UPF0312 protein MW2606 from Staphylococcus aureus (strain MW2).